Reading from the N-terminus, the 88-residue chain is Large ribosomal subunit protein bL27 (88 aa).

The disordered stretch occupies residues 1-25 (MAHKKGASSSRNGRDSNAQRLGVKR). Residues 7–19 (ASSSRNGRDSNAQ) show a composition bias toward polar residues.

Belongs to the bacterial ribosomal protein bL27 family.

The protein is Large ribosomal subunit protein bL27 of Nocardia farcinica (strain IFM 10152).